Consider the following 219-residue polypeptide: Ribose-5-phosphate isomerase A (219 aa).

Substrate is bound by residues 28-31, 81-84, and 94-97; these read SGST, DGAD, and KGGG. Residue E103 is the Proton acceptor of the active site. Residue K121 coordinates substrate.

The protein belongs to the ribose 5-phosphate isomerase family. In terms of assembly, homodimer.

The enzyme catalyses aldehydo-D-ribose 5-phosphate = D-ribulose 5-phosphate. The protein operates within carbohydrate degradation; pentose phosphate pathway; D-ribose 5-phosphate from D-ribulose 5-phosphate (non-oxidative stage): step 1/1. Its function is as follows. Catalyzes the reversible conversion of ribose-5-phosphate to ribulose 5-phosphate. This Haemophilus ducreyi (strain 35000HP / ATCC 700724) protein is Ribose-5-phosphate isomerase A.